A 135-amino-acid chain; its full sequence is MIYLETSALVKLIRIEVESDALADWLDDRTELRWITSALTEVELSRAIRAVSPEGLPAVPSVLARLDRFEIDAVIRSTAAAYPNPALRSLDAIHLATAQTAGSVAPLTALVTYDNRLKEAAEALSLAVVAPGQAR.

The PINc domain occupies 2–123 (IYLETSALVK…DNRLKEAAEA (122 aa)). Mg(2+) is bound by residues Glu-5 and Asp-91.

Belongs to the PINc/VapC protein family. Mg(2+) serves as cofactor.

Functionally, toxic component of a type II toxin-antitoxin (TA) system. An RNase. Its toxic effect is neutralized by coexpression with cognate antitoxin VapB35. This is Ribonuclease VapC35 from Mycobacterium tuberculosis (strain CDC 1551 / Oshkosh).